The sequence spans 843 residues: Protein translocase subunit SecA (843 aa).

Residues glutamine 85, glycine 103 to threonine 107, and aspartate 490 contribute to the ATP site. Positions lysine 799–lysine 834 are disordered. Over residues valine 802–arginine 823 the composition is skewed to basic and acidic residues. Cysteine 827, cysteine 829, cysteine 838, and cysteine 839 together coordinate Zn(2+).

The protein belongs to the SecA family. In terms of assembly, monomer and homodimer. Part of the essential Sec protein translocation apparatus which comprises SecA, SecYEG and auxiliary proteins SecDF. Other proteins may also be involved. Zn(2+) is required as a cofactor.

It is found in the cell membrane. Its subcellular location is the cytoplasm. It carries out the reaction ATP + H2O + cellular proteinSide 1 = ADP + phosphate + cellular proteinSide 2.. Functionally, part of the Sec protein translocase complex. Interacts with the SecYEG preprotein conducting channel. Has a central role in coupling the hydrolysis of ATP to the transfer of proteins into and across the cell membrane, serving as an ATP-driven molecular motor driving the stepwise translocation of polypeptide chains across the membrane. The chain is Protein translocase subunit SecA from Heliobacterium modesticaldum (strain ATCC 51547 / Ice1).